Consider the following 440-residue polypeptide: COP9 signalosome complex subunit 4 (440 aa).

The PCI domain occupies 216–386 (SNRQFLAASQ…RIIYFESGLE (171 aa)).

Belongs to the CSN4 family. As to quaternary structure, component of the COP9 signalosome (CSN) complex.

It is found in the cytoplasm. It localises to the nucleus. Component of the COP9 signalosome (CSN) complex that acts as an regulator of the ubiquitin (Ubl) conjugation pathway by mediating the deneddylation of the cullin subunit of SCF-type E3 ubiquitin-protein ligase complexes. The CSN complex is involved in the regulation of the circadian clock through its control of the stability of the SCF(FWD1) complex. This chain is COP9 signalosome complex subunit 4 (csn-4), found in Neurospora crassa (strain ATCC 24698 / 74-OR23-1A / CBS 708.71 / DSM 1257 / FGSC 987).